A 208-amino-acid chain; its full sequence is Putative speedy protein E7 (208 aa).

This sequence belongs to the Speedy/Ringo family.

In Homo sapiens (Human), this protein is Putative speedy protein E7 (SPDYE7P).